Reading from the N-terminus, the 554-residue chain is Phosphomethylpyrimidine synthase (554 aa).

Substrate is bound by residues asparagine 188, methionine 217, tyrosine 246, histidine 282, 302–304 (SRG), 343–346 (DGLR), and glutamate 382. Zn(2+) is bound at residue histidine 386. Residue tyrosine 409 coordinates substrate. Histidine 450 provides a ligand contact to Zn(2+). Positions 530, 533, and 538 each coordinate [4Fe-4S] cluster.

Belongs to the ThiC family. In terms of assembly, homodimer. It depends on [4Fe-4S] cluster as a cofactor.

The catalysed reaction is 5-amino-1-(5-phospho-beta-D-ribosyl)imidazole + S-adenosyl-L-methionine = 4-amino-2-methyl-5-(phosphooxymethyl)pyrimidine + CO + 5'-deoxyadenosine + formate + L-methionine + 3 H(+). It functions in the pathway cofactor biosynthesis; thiamine diphosphate biosynthesis. Catalyzes the synthesis of the hydroxymethylpyrimidine phosphate (HMP-P) moiety of thiamine from aminoimidazole ribotide (AIR) in a radical S-adenosyl-L-methionine (SAM)-dependent reaction. This chain is Phosphomethylpyrimidine synthase, found in Coxiella burnetii (strain RSA 493 / Nine Mile phase I).